A 195-amino-acid polypeptide reads, in one-letter code: Peptidyl-tRNA hydrolase (195 aa).

TRNA is bound at residue tyrosine 18. The active-site Proton acceptor is histidine 23. TRNA is bound by residues phenylalanine 69, asparagine 71, and asparagine 117.

The protein belongs to the PTH family. Monomer.

Its subcellular location is the cytoplasm. It carries out the reaction an N-acyl-L-alpha-aminoacyl-tRNA + H2O = an N-acyl-L-amino acid + a tRNA + H(+). Hydrolyzes ribosome-free peptidyl-tRNAs (with 1 or more amino acids incorporated), which drop off the ribosome during protein synthesis, or as a result of ribosome stalling. Its function is as follows. Catalyzes the release of premature peptidyl moieties from peptidyl-tRNA molecules trapped in stalled 50S ribosomal subunits, and thus maintains levels of free tRNAs and 50S ribosomes. The sequence is that of Peptidyl-tRNA hydrolase from Alcanivorax borkumensis (strain ATCC 700651 / DSM 11573 / NCIMB 13689 / SK2).